A 389-amino-acid polypeptide reads, in one-letter code: Large envelope protein (389 aa).

Met-1 carries the N-acetylmethionine modification. Gly-2 carries N-myristoyl glycine; by host lipidation. Residues 2-108 (GTNLSVPNPL…PPLRDTHPQA (107 aa)) form a pre-S1 region. The interval 2–163 (GTNLSVPNPL…LSKTGDPVPN (162 aa)) is pre-S. At 2–170 (GTNLSVPNPL…VPNMENIASG (169 aa)) the chain is on the virion surface; in external conformation side. Topologically, residues 2–242 (GTNLSVPNPL…PGYRWMCLRR (241 aa)) are intravirion; in internal conformation. The interval 73 to 107 (ILTSVPAAPPPASTNRQSGRQPTPLSPPLRDTHPQ) is disordered. The segment covering 85–95 (STNRQSGRQPT) has biased composition (polar residues). A pre-S2 region spans residues 109 to 163 (MQWNSTTFHQTLQDPRVRALYFPAGGSSSGTVSPAQNTVSAISSILSKTGDPVPN). A helical membrane pass occupies residues 171-191 (LLGPLLVLQAGFFLLTKILTI). The Intravirion; in external conformation segment spans residues 192–242 (PQSLDSWWTSLNFLGGTPVCLGQNSQSQISSHSPTCCPPICPGYRWMCLRR). Residues 243–263 (FIIFLCILLLCLIFLLVLLDY) form a helical membrane-spanning segment. At 264–337 (QGMLPVCPLI…WASVRFSWLS (74 aa)) the chain is on the virion surface side. Asn-309 is a glycosylation site (N-linked (GlcNAc...) asparagine; by host). Residues 338-358 (LLVPFVQWFVGLSPTVWLSVI) traverse the membrane as a helical segment. Residues 359–364 (WMMWYW) lie on the Intravirion side of the membrane. A helical membrane pass occupies residues 365–387 (GPSLYNILSPFMPLLPIFFCLWV). Residues 388–389 (YI) are Virion surface-facing.

It belongs to the orthohepadnavirus major surface antigen family. In terms of assembly, interacts (via its myristoylated pre-S1 region) with the host SLC10A1/NTCP; this interaction is essential for viral entry. In its internal form (Li-HBsAg), interacts with the capsid protein and with the isoform S. Interacts with host chaperone CANX. As to quaternary structure, associates with host chaperone CANX through its pre-S2 N glycan; this association may be essential for isoform M proper secretion. In terms of assembly, interacts with isoform L. Interacts with the antigens of satellite virus HDV (HDVAgs); this interaction is required for encapsidation of HDV genomic RNA. Isoform M is N-terminally acetylated by host at a ratio of 90%, and N-glycosylated by host at the pre-S2 region. Post-translationally, myristoylated; this modification is essential for its interaction with the host protein SLC10A1/NTCP.

The protein localises to the virion membrane. Functionally, the large envelope protein exists in two topological conformations, one which is termed 'external' or Le-HBsAg and the other 'internal' or Li-HBsAg. In its external conformation the protein attaches the virus to cell receptors and thereby initiating infection. This interaction determines the species specificity and liver tropism. This attachment induces virion internalization predominantly through caveolin-mediated endocytosis. The large envelope protein also assures fusion between virion membrane and endosomal membrane. In its internal conformation the protein plays a role in virion morphogenesis and mediates the contact with the nucleocapsid like a matrix protein. In terms of biological role, the middle envelope protein plays an important role in the budding of the virion. It is involved in the induction of budding in a nucleocapsid independent way. In this process the majority of envelope proteins bud to form subviral lipoprotein particles of 22 nm of diameter that do not contain a nucleocapsid. The chain is Large envelope protein from Hepatitis B virus genotype B1 subtype adw (isolate Japan/pJDW233/1988) (HBV-B).